Consider the following 331-residue polypeptide: Malate dehydrogenase (331 aa).

14-20 provides a ligand contact to NAD(+); sequence GAAGSIG. Substrate is bound by residues Arg-95 and Arg-101. Residues Asn-108, Gln-115, and 132–134 contribute to the NAD(+) site; that span reads VGN. Residues Asn-134 and Arg-165 each coordinate substrate. Residue His-190 is the Proton acceptor of the active site.

Belongs to the LDH/MDH superfamily. MDH type 2 family.

It carries out the reaction (S)-malate + NAD(+) = oxaloacetate + NADH + H(+). In terms of biological role, catalyzes the reversible oxidation of malate to oxaloacetate. The chain is Malate dehydrogenase from Rhodococcus jostii (strain RHA1).